The sequence spans 118 residues: Large ribosomal subunit protein uL18 (118 aa).

Belongs to the universal ribosomal protein uL18 family. As to quaternary structure, part of the 50S ribosomal subunit; part of the 5S rRNA/L5/L18/L25 subcomplex. Contacts the 5S and 23S rRNAs.

Its function is as follows. This is one of the proteins that bind and probably mediate the attachment of the 5S RNA into the large ribosomal subunit, where it forms part of the central protuberance. The polypeptide is Large ribosomal subunit protein uL18 (Campylobacter jejuni subsp. jejuni serotype O:6 (strain 81116 / NCTC 11828)).